We begin with the raw amino-acid sequence, 292 residues long: Tetratricopeptide repeat protein 1 (292 aa).

Composition is skewed to basic and acidic residues over residues 1 to 12 (MEEKSEDCKVPE) and 47 to 64 (KAAE…ECFH). Residues 1–125 (MEEKSEDCKV…SAKLKEEGNE (125 aa)) are disordered. Residues 88–98 (SSSELDEEYLI) show a composition bias toward acidic residues. Ser90 bears the Phosphoserine mark. The segment covering 99–125 (ELEKNMPEEEKQKRREESAKLKEEGNE) has biased composition (basic and acidic residues). TPR repeat units follow at residues 116–149 (SAKL…CPAC), 155–188 (SVLF…NPTY), and 189–222 (IRAI…DPSV).

Interacts with the GAP domain of NF1. Interacts (via TPR repeats) with HSP90AA1 and HSPA8.

The sequence is that of Tetratricopeptide repeat protein 1 (Ttc1) from Mus musculus (Mouse).